The primary structure comprises 388 residues: Succinate--CoA ligase [ADP-forming] subunit beta (388 aa).

The region spanning 9–244 is the ATP-grasp domain; sequence KEILRKYNVP…LDEEDANEIE (236 aa). ATP is bound by residues Lys-46, 53–55, Glu-99, Ala-102, and Glu-107; that span reads GRG. The Mg(2+) site is built by Asn-199 and Asp-213. Substrate is bound by residues Asn-264 and 321–323; that span reads GIM.

This sequence belongs to the succinate/malate CoA ligase beta subunit family. In terms of assembly, heterotetramer of two alpha and two beta subunits. It depends on Mg(2+) as a cofactor.

The catalysed reaction is succinate + ATP + CoA = succinyl-CoA + ADP + phosphate. The enzyme catalyses GTP + succinate + CoA = succinyl-CoA + GDP + phosphate. It participates in carbohydrate metabolism; tricarboxylic acid cycle; succinate from succinyl-CoA (ligase route): step 1/1. Succinyl-CoA synthetase functions in the citric acid cycle (TCA), coupling the hydrolysis of succinyl-CoA to the synthesis of either ATP or GTP and thus represents the only step of substrate-level phosphorylation in the TCA. The beta subunit provides nucleotide specificity of the enzyme and binds the substrate succinate, while the binding sites for coenzyme A and phosphate are found in the alpha subunit. In Cupriavidus taiwanensis (strain DSM 17343 / BCRC 17206 / CCUG 44338 / CIP 107171 / LMG 19424 / R1) (Ralstonia taiwanensis (strain LMG 19424)), this protein is Succinate--CoA ligase [ADP-forming] subunit beta.